Here is a 203-residue protein sequence, read N- to C-terminus: Probable host range protein 2-3 (203 aa).

The tract at residues 182-203 (LEEEDEEKIADTGNDNQKDAED) is disordered.

This sequence belongs to the poxviridae C7 protein family.

Its function is as follows. Plays a role for multiplication of the virus in different cell types. The protein is Probable host range protein 2-3 of Myxoma virus (strain Lausanne) (MYXV).